The chain runs to 322 residues: CXXC-type zinc finger protein 5 (322 aa).

The segment covering 1-10 (MSSLGGGSQD) has biased composition (gly residues). Residues 1–100 (MSSLGGGSQD…SGGGSMMGGE (100 aa)) are disordered. Low complexity-rich tracts occupy residues 11–20 (AGGSSSSSTN) and 28–52 (SGPKAGAADKSAVVAAAAPASVADD). Position 53 is a phosphothreonine (Thr53). Residues 87-97 (SSGGSGGGSMM) show a composition bias toward gly residues. The segment at 256–297 (GKKKRKRCGMCAPCRRRINCEQCSSCRNRKTGHQICKFRKCE) adopts a CXXC-type zinc-finger fold. A Nuclear localization signal motif is present at residues 257–262 (KKKRKR). Positions 263, 266, 269, 275, 278, 281, 291, and 296 each coordinate Zn(2+).

In terms of assembly, interacts with DVL1. Interacts with RBPJ.

The protein resides in the nucleus. It is found in the cytoplasm. May indirectly participate in activation of the NF-kappa-B and MAPK pathways. Acts as a mediator of BMP4-mediated modulation of canonical Wnt signaling activity in neural stem cells. Required for DNA damage-induced ATM phosphorylation, p53 activation and cell cycle arrest. Involved in myelopoiesis. Transcription factor. Binds to the oxygen responsive element of COX4I2 and represses its transcription under hypoxia conditions (4% oxygen), as well as normoxia conditions (20% oxygen). May repress COX4I2 transactivation induced by CHCHD2 and RBPJ. Binds preferentially to DNA containing cytidine-phosphate-guanosine (CpG) dinucleotides over CpH (H=A, T, and C), hemimethylated-CpG and hemimethylated-hydroxymethyl-CpG. The polypeptide is CXXC-type zinc finger protein 5 (CXXC5) (Homo sapiens (Human)).